The following is a 348-amino-acid chain: Nicotinate-nucleotide pyrophosphorylase [carboxylating], chloroplastic (348 aa).

A chloroplast-targeting transit peptide spans 1 to 41 (MISVSRFLSPQFYAIPRSFVKMSASATQTAGEVSMGIKPPS). Substrate-binding positions include R139, 170–172 (TRK), R194, K204, E237, D264, 296–298 (SGN), and 317–319 (SGA).

This sequence belongs to the NadC/ModD family.

The protein resides in the plastid. It is found in the chloroplast. It carries out the reaction nicotinate beta-D-ribonucleotide + CO2 + diphosphate = quinolinate + 5-phospho-alpha-D-ribose 1-diphosphate + 2 H(+). It functions in the pathway cofactor biosynthesis; NAD(+) biosynthesis; nicotinate D-ribonucleotide from quinolinate: step 1/1. Involved in the biosynthesis of NAD(+). Catalyzes the conversion of quinolate to nicotinate to nicotinate beta-D-ribonucleotide. This Arabidopsis thaliana (Mouse-ear cress) protein is Nicotinate-nucleotide pyrophosphorylase [carboxylating], chloroplastic.